Reading from the N-terminus, the 123-residue chain is Glycine cleavage system H protein (123 aa).

One can recognise a Lipoyl-binding domain in the interval 23–104; it reads HWLAGITDHA…PYDAWIFSFE (82 aa). Lysine 64 is subject to N6-lipoyllysine.

Belongs to the GcvH family. In terms of assembly, the glycine cleavage system is composed of four proteins: P, T, L and H. (R)-lipoate serves as cofactor.

In terms of biological role, the glycine cleavage system catalyzes the degradation of glycine. The H protein shuttles the methylamine group of glycine from the P protein to the T protein. The chain is Glycine cleavage system H protein from Methylobacillus flagellatus (strain ATCC 51484 / DSM 6875 / VKM B-1610 / KT).